The chain runs to 920 residues: Protein translocase subunit SecA (920 aa).

Residues Gln-85, 103 to 107 (GEGKT), and Asp-514 contribute to the ATP site. Cys-904, Cys-906, Cys-915, and His-916 together coordinate Zn(2+).

Belongs to the SecA family. As to quaternary structure, monomer and homodimer. Part of the essential Sec protein translocation apparatus which comprises SecA, SecYEG and auxiliary proteins SecDF-YajC and YidC. Requires Zn(2+) as cofactor.

Its subcellular location is the cell inner membrane. The protein resides in the cytoplasm. The enzyme catalyses ATP + H2O + cellular proteinSide 1 = ADP + phosphate + cellular proteinSide 2.. Functionally, part of the Sec protein translocase complex. Interacts with the SecYEG preprotein conducting channel. Has a central role in coupling the hydrolysis of ATP to the transfer of proteins into and across the cell membrane, serving both as a receptor for the preprotein-SecB complex and as an ATP-driven molecular motor driving the stepwise translocation of polypeptide chains across the membrane. This is Protein translocase subunit SecA from Janthinobacterium sp. (strain Marseille) (Minibacterium massiliensis).